A 459-amino-acid chain; its full sequence is tRNA modification GTPase MnmE (459 aa).

Positions 30, 93, and 132 each coordinate (6S)-5-formyl-5,6,7,8-tetrahydrofolate. Residues 226-381 (GVTMAIVGKP…LEEKILESVK (156 aa)) enclose the TrmE-type G domain. K(+) is bound at residue asparagine 236. GTP-binding positions include 236 to 241 (NVGKST), 255 to 261 (TDIPGTT), and 280 to 283 (DTAG). Residue serine 240 participates in Mg(2+) binding. K(+)-binding residues include threonine 255, isoleucine 257, and threonine 260. Residue threonine 261 participates in Mg(2+) binding. Lysine 459 contributes to the (6S)-5-formyl-5,6,7,8-tetrahydrofolate binding site.

The protein belongs to the TRAFAC class TrmE-Era-EngA-EngB-Septin-like GTPase superfamily. TrmE GTPase family. Homodimer. Heterotetramer of two MnmE and two MnmG subunits. K(+) is required as a cofactor.

The protein localises to the cytoplasm. Its function is as follows. Exhibits a very high intrinsic GTPase hydrolysis rate. Involved in the addition of a carboxymethylaminomethyl (cmnm) group at the wobble position (U34) of certain tRNAs, forming tRNA-cmnm(5)s(2)U34. In Fervidobacterium nodosum (strain ATCC 35602 / DSM 5306 / Rt17-B1), this protein is tRNA modification GTPase MnmE.